The sequence spans 424 residues: Serine--tRNA ligase (424 aa).

232–234 (TAE) serves as a coordination point for L-serine. Residue 263–265 (RSE) coordinates ATP. Glutamate 286 provides a ligand contact to L-serine. 350–353 (EISS) is a binding site for ATP. Serine 385 contacts L-serine.

Belongs to the class-II aminoacyl-tRNA synthetase family. Type-1 seryl-tRNA synthetase subfamily. In terms of assembly, homodimer. The tRNA molecule binds across the dimer.

It localises to the cytoplasm. It catalyses the reaction tRNA(Ser) + L-serine + ATP = L-seryl-tRNA(Ser) + AMP + diphosphate + H(+). It carries out the reaction tRNA(Sec) + L-serine + ATP = L-seryl-tRNA(Sec) + AMP + diphosphate + H(+). It functions in the pathway aminoacyl-tRNA biosynthesis; selenocysteinyl-tRNA(Sec) biosynthesis; L-seryl-tRNA(Sec) from L-serine and tRNA(Sec): step 1/1. Functionally, catalyzes the attachment of serine to tRNA(Ser). Is also able to aminoacylate tRNA(Sec) with serine, to form the misacylated tRNA L-seryl-tRNA(Sec), which will be further converted into selenocysteinyl-tRNA(Sec). This is Serine--tRNA ligase from Latilactobacillus sakei subsp. sakei (strain 23K) (Lactobacillus sakei subsp. sakei).